A 439-amino-acid chain; its full sequence is Proline--tRNA ligase (439 aa).

It belongs to the class-II aminoacyl-tRNA synthetase family. ProS type 2 subfamily. As to quaternary structure, homodimer.

It is found in the cytoplasm. The enzyme catalyses tRNA(Pro) + L-proline + ATP = L-prolyl-tRNA(Pro) + AMP + diphosphate. Functionally, catalyzes the attachment of proline to tRNA(Pro) in a two-step reaction: proline is first activated by ATP to form Pro-AMP and then transferred to the acceptor end of tRNA(Pro). The sequence is that of Proline--tRNA ligase from Rhodopseudomonas palustris (strain BisB5).